The chain runs to 403 residues: Phosphoglycerate kinase (403 aa).

Residues 21–23 (DFN), Arg-36, 59–62 (HLGR), Arg-119, and Arg-159 contribute to the substrate site. Residues Lys-214, Gly-301, Glu-332, and 359–362 (GGDS) each bind ATP.

The protein belongs to the phosphoglycerate kinase family. Monomer.

It is found in the cytoplasm. It catalyses the reaction (2R)-3-phosphoglycerate + ATP = (2R)-3-phospho-glyceroyl phosphate + ADP. It functions in the pathway carbohydrate degradation; glycolysis; pyruvate from D-glyceraldehyde 3-phosphate: step 2/5. The sequence is that of Phosphoglycerate kinase from Lactobacillus delbrueckii subsp. bulgaricus (strain ATCC 11842 / DSM 20081 / BCRC 10696 / JCM 1002 / NBRC 13953 / NCIMB 11778 / NCTC 12712 / WDCM 00102 / Lb 14).